A 488-amino-acid polypeptide reads, in one-letter code: Envelope glycoprotein gp62 (488 aa).

The signal sequence occupies residues 1–20 (MGKFLATLILFFQFCPLILG). Residues 21 to 442 (DYSPSCCTLT…LGLSQWAREA (422 aa)) lie on the Extracellular side of the membrane. N140 and N222 each carry an N-linked (GlcNAc...) asparagine; by host glycan. The CXXC motif lies at 225-228 (CIVC). 3 disulfide bridges follow: C225–C228, C225–C401, and C393–C400. 2 N-linked (GlcNAc...) asparagine; by host glycosylation sites follow: N244 and N272. The tract at residues 313-333 (AVPVAVWLVSALAIGAGVAGG) is fusion peptide. Coiled coils occupy residues 341 to 387 (ASGK…LLFW) and 397 to 429 (QEQC…GWGL). An immunosuppression region spans residues 376–392 (AQNRRGLDLLFWEQGGL). The short motif at 393–401 (CKALQEQCC) is the CX6CC element. N-linked (GlcNAc...) asparagine; by host glycosylation is present at N404. Residues 443–463 (LQTGITLVALLLLVILAGPCI) form a helical membrane-spanning segment. C462 is lipidated: S-palmitoyl cysteine; by host. The Cytoplasmic segment spans residues 464 to 488 (LRQLRHLPSRVRYPHYSLINPESSL).

In terms of assembly, the mature envelope protein (Env) consists of a trimer of SU-TM heterodimers attached by a labile interchain disulfide bond. Specific enzymatic cleavages in vivo yield mature proteins. Envelope glycoproteins are synthesized as an inactive precursor that is N-glycosylated and processed likely by host cell furin or by a furin-like protease in the Golgi to yield the mature SU and TM proteins. The cleavage site between SU and TM requires the minimal sequence [KR]-X-[KR]-R. In terms of processing, the CXXC motif is highly conserved across a broad range of retroviral envelope proteins. It is thought to participate in the formation of a labile disulfide bond possibly with the CX6CC motif present in the transmembrane protein. Isomerization of the intersubunit disulfide bond to an SU intrachain disulfide bond is thought to occur upon receptor recognition in order to allow membrane fusion. Post-translationally, the transmembrane protein is palmitoylated.

The protein localises to the virion membrane. The protein resides in the host cell membrane. The surface protein (SU) attaches the virus to the host cell by binding to its receptor. This interaction triggers the refolding of the transmembrane protein (TM) and is thought to activate its fusogenic potential by unmasking its fusion peptide. Fusion occurs at the host cell plasma membrane. Functionally, the transmembrane protein (TM) acts as a class I viral fusion protein. Under the current model, the protein has at least 3 conformational states: pre-fusion native state, pre-hairpin intermediate state, and post-fusion hairpin state. During viral and target cell membrane fusion, the coiled coil regions (heptad repeats) assume a trimer-of-hairpins structure, positioning the fusion peptide in close proximity to the C-terminal region of the ectodomain. The formation of this structure appears to drive apposition and subsequent fusion of viral and target cell membranes. Membranes fusion leads to delivery of the nucleocapsid into the cytoplasm. The polypeptide is Envelope glycoprotein gp62 (env) (Human T-cell leukemia virus 1 (isolate Caribbea CH subtype A) (HTLV-1)).